The primary structure comprises 864 residues: Ribosome biogenesis protein ERB1 (864 aa).

The segment covering 1–52 (MAVDKGRRPVPPERRAQGRKRAEPGDVTIRETRTRPVHTPEPEPELLAKDGI) has biased composition (basic and acidic residues). Disordered stretches follow at residues 1 to 153 (MAVD…VKEG) and 191 to 231 (ESRN…STED). Residues 53 to 71 (LELEDDDDNDDDDDDDDDD) show a composition bias toward acidic residues. The span at 72 to 83 (KSNHHDGAPKNE) shows a compositional bias: basic and acidic residues. Residues 100 to 135 (DDGDEDEEEDDEDEDEDASDDEAFDSDDLENWDEEA) are compositionally biased toward acidic residues. WD repeat units lie at residues 509–549 (AHAP…CVAT), 559–599 (ADRS…KTMY), 694–732 (NSAM…LVKT), 735–774 (PGVR…RPYK), 778–817 (YHSR…DLLQ), and 833–864 (QDAL…LWTP).

This sequence belongs to the WD repeat BOP1/ERB1 family. As to quaternary structure, component of the NOP7 complex, composed of ERB1, NOP7 and YTM1. The complex is held together by ERB1, which interacts with NOP7 via its N-terminal domain and with YTM1 via a high-affinity interaction between the seven-bladed beta-propeller domains of the 2 proteins. The NOP7 complex associates with the 66S pre-ribosome.

The protein localises to the nucleus. Its subcellular location is the nucleolus. It is found in the nucleoplasm. In terms of biological role, component of the NOP7 complex, which is required for maturation of the 25S and 5.8S ribosomal RNAs and formation of the 60S ribosome. This chain is Ribosome biogenesis protein ERB1, found in Malassezia globosa (strain ATCC MYA-4612 / CBS 7966) (Dandruff-associated fungus).